The chain runs to 195 residues: Imidazoleglycerol-phosphate dehydratase (195 aa).

The protein belongs to the imidazoleglycerol-phosphate dehydratase family.

It is found in the cytoplasm. It catalyses the reaction D-erythro-1-(imidazol-4-yl)glycerol 3-phosphate = 3-(imidazol-4-yl)-2-oxopropyl phosphate + H2O. Its pathway is amino-acid biosynthesis; L-histidine biosynthesis; L-histidine from 5-phospho-alpha-D-ribose 1-diphosphate: step 6/9. This Burkholderia vietnamiensis (strain G4 / LMG 22486) (Burkholderia cepacia (strain R1808)) protein is Imidazoleglycerol-phosphate dehydratase.